Here is a 1234-residue protein sequence, read N- to C-terminus: Transcription-repair-coupling factor (1234 aa).

Residues 663–824 (DMEKPIPMDR…LAGIREMSTI (162 aa)) form the Helicase ATP-binding domain. ATP is bound at residue 676–683 (GDVGYGKT). The DEEQ box motif lies at 777–780 (DEEQ). The Helicase C-terminal domain occupies 842–999 (DDKQIAAALR…GMAVALKDLE (158 aa)). Residues 1207–1234 (RQHIGITNPSPPGEDGRGRNTTIKERQP) form a disordered region. Residues 1220 to 1234 (EDGRGRNTTIKERQP) are compositionally biased toward basic and acidic residues.

It in the N-terminal section; belongs to the UvrB family. This sequence in the C-terminal section; belongs to the helicase family. RecG subfamily.

The protein resides in the cytoplasm. In terms of biological role, couples transcription and DNA repair by recognizing RNA polymerase (RNAP) stalled at DNA lesions. Mediates ATP-dependent release of RNAP and its truncated transcript from the DNA, and recruitment of nucleotide excision repair machinery to the damaged site. The chain is Transcription-repair-coupling factor from Mycobacterium bovis (strain ATCC BAA-935 / AF2122/97).